We begin with the raw amino-acid sequence, 197 residues long: Recombination protein RecR (197 aa).

Residues 57–72 form a C4-type zinc finger; that stretch reads CSVCFAITEDDPCWIC. Residues 79 to 174 enclose the Toprim domain; it reads GTICVVEEPQ…KVTRLAHGIP (96 aa).

The protein belongs to the RecR family.

May play a role in DNA repair. It seems to be involved in an RecBC-independent recombinational process of DNA repair. It may act with RecF and RecO. In Citrifermentans bemidjiense (strain ATCC BAA-1014 / DSM 16622 / JCM 12645 / Bem) (Geobacter bemidjiensis), this protein is Recombination protein RecR.